The following is a 235-amino-acid chain: Ferric nitrobindin-like protein (235 aa).

The disordered stretch occupies residues 1 to 59 (MSDLASEGSDPAERASEHSNGNAPADRPARRSGDQAVADAAERAKATGSRNIPVLPDLP). Positions 85–91 (GVWRGEG) match the GXWXGXG motif.

It belongs to the nitrobindin family.

This Nocardia farcinica (strain IFM 10152) protein is Ferric nitrobindin-like protein.